A 753-amino-acid chain; its full sequence is Protein-lysine N-methyltransferase SMYD4 (753 aa).

S-adenosyl-L-methionine is bound at residue 112-114; that stretch reads RSA. In terms of domain architecture, SET spans 186–528; the sequence is DGVSVYFSSD…AGQEILHCYG (343 aa). Zn(2+) contacts are provided by Cys246, Cys249, Cys259, Cys262, Cys268, Cys272, His281, and Cys285. The MYND-type zinc-finger motif lies at 246–285; the sequence is CHHCLSQSLSFVPCPKCSYARYCGESCQKDAWDQWHQWEC. Residues 467–468 and Tyr527 contribute to the S-adenosyl-L-methionine site; that span reads NH.

The protein belongs to the class V-like SAM-binding methyltransferase superfamily.

The protein localises to the nucleus. It localises to the cytoplasm. It carries out the reaction L-lysyl-[protein] + S-adenosyl-L-methionine = N(6)-methyl-L-lysyl-[protein] + S-adenosyl-L-homocysteine + H(+). Functionally, protein-lysine N-methyltransferase. Monomethylates PRMT5, modulating its transcriptional activity. May also act as a histone methyltransferase. Plays a critical role in cardiac development. Acts as a key epigenetic regulator of gene expression during cardiac development via its dual activities as a methyltransferase and negative regulator of HDAC1. This chain is Protein-lysine N-methyltransferase SMYD4 (smyd4), found in Danio rerio (Zebrafish).